The chain runs to 88 residues: Small ribosomal subunit protein bS16 (88 aa).

The protein belongs to the bacterial ribosomal protein bS16 family.

This chain is Small ribosomal subunit protein bS16, found in Baumannia cicadellinicola subsp. Homalodisca coagulata.